The primary structure comprises 136 residues: Putative LysR family substrate binding domain-containing protein YagP (136 aa).

This sequence belongs to the LysR transcriptional regulatory family.

The chain is Putative LysR family substrate binding domain-containing protein YagP (yagP) from Escherichia coli (strain K12).